The sequence spans 195 residues: Putative NADH dehydrogenase/NAD(P)H nitroreductase Caul_0018 (195 aa).

The protein belongs to the nitroreductase family. HadB/RutE subfamily. FMN serves as cofactor.

The polypeptide is Putative NADH dehydrogenase/NAD(P)H nitroreductase Caul_0018 (Caulobacter sp. (strain K31)).